Reading from the N-terminus, the 59-residue chain is Large ribosomal subunit protein bL32 (59 aa).

A disordered region spans residues 1-59; sequence MAVQQNKKSPSKRGMHRAHDFLTTPPLAVESTTGEAHLRHHISPAGFYRGKKVTKGKGE. Residues 49 to 59 show a composition bias toward basic residues; it reads RGKKVTKGKGE.

This sequence belongs to the bacterial ribosomal protein bL32 family.

The sequence is that of Large ribosomal subunit protein bL32 from Dechloromonas aromatica (strain RCB).